A 373-amino-acid polypeptide reads, in one-letter code: Dual-specificity RNA methyltransferase RlmN (373 aa).

Catalysis depends on Glu94, which acts as the Proton acceptor. Residues 100 to 339 enclose the Radical SAM core domain; sequence EDDRATLCVS…VIVRKTRGDD (240 aa). Cys107 and Cys344 are disulfide-bonded. [4Fe-4S] cluster is bound by residues Cys114, Cys118, and Cys121. S-adenosyl-L-methionine contacts are provided by residues 168–169, Ser200, 222–224, and Asn301; these read GE and SIH. Residue Cys344 is the S-methylcysteine intermediate of the active site.

This sequence belongs to the radical SAM superfamily. RlmN family. The cofactor is [4Fe-4S] cluster.

It is found in the cytoplasm. The catalysed reaction is adenosine(2503) in 23S rRNA + 2 reduced [2Fe-2S]-[ferredoxin] + 2 S-adenosyl-L-methionine = 2-methyladenosine(2503) in 23S rRNA + 5'-deoxyadenosine + L-methionine + 2 oxidized [2Fe-2S]-[ferredoxin] + S-adenosyl-L-homocysteine. It carries out the reaction adenosine(37) in tRNA + 2 reduced [2Fe-2S]-[ferredoxin] + 2 S-adenosyl-L-methionine = 2-methyladenosine(37) in tRNA + 5'-deoxyadenosine + L-methionine + 2 oxidized [2Fe-2S]-[ferredoxin] + S-adenosyl-L-homocysteine. Its function is as follows. Specifically methylates position 2 of adenine 2503 in 23S rRNA and position 2 of adenine 37 in tRNAs. m2A2503 modification seems to play a crucial role in the proofreading step occurring at the peptidyl transferase center and thus would serve to optimize ribosomal fidelity. This chain is Dual-specificity RNA methyltransferase RlmN, found in Shewanella baltica (strain OS155 / ATCC BAA-1091).